Consider the following 232-residue polypeptide: Ion-translocating oxidoreductase complex subunit E (232 aa).

5 consecutive transmembrane segments (helical) span residues 39–59 (LGLG…ISSL), 69–89 (IPIY…LINA), 92–112 (FGLY…CIVV), 125–145 (ALSA…MFVL), and 182–202 (PFLL…MLAV).

This sequence belongs to the NqrDE/RnfAE family. In terms of assembly, the complex is composed of six subunits: RnfA, RnfB, RnfC, RnfD, RnfE and RnfG.

It localises to the cell inner membrane. Part of a membrane-bound complex that couples electron transfer with translocation of ions across the membrane. In Klebsiella pneumoniae (strain 342), this protein is Ion-translocating oxidoreductase complex subunit E.